A 467-amino-acid chain; its full sequence is UDP-N-acetylmuramoylalanine--D-glutamate ligase (467 aa).

Residue 121 to 127 participates in ATP binding; sequence GTNGKST.

It belongs to the MurCDEF family.

The protein localises to the cytoplasm. The catalysed reaction is UDP-N-acetyl-alpha-D-muramoyl-L-alanine + D-glutamate + ATP = UDP-N-acetyl-alpha-D-muramoyl-L-alanyl-D-glutamate + ADP + phosphate + H(+). It functions in the pathway cell wall biogenesis; peptidoglycan biosynthesis. Its function is as follows. Cell wall formation. Catalyzes the addition of glutamate to the nucleotide precursor UDP-N-acetylmuramoyl-L-alanine (UMA). The polypeptide is UDP-N-acetylmuramoylalanine--D-glutamate ligase (Brucella suis biovar 1 (strain 1330)).